We begin with the raw amino-acid sequence, 492 residues long: 3-octaprenyl-4-hydroxybenzoate carboxy-lyase (492 aa).

Mn(2+) is bound at residue asparagine 177. Residues 180 to 182 (IYR), 194 to 196 (RWL), and 199 to 200 (RG) contribute to the prenylated FMN site. Glutamate 243 provides a ligand contact to Mn(2+). The active-site Proton donor is the aspartate 292.

The protein belongs to the UbiD family. As to quaternary structure, homohexamer. Prenylated FMN is required as a cofactor. Mn(2+) serves as cofactor.

It localises to the cell membrane. The catalysed reaction is a 4-hydroxy-3-(all-trans-polyprenyl)benzoate + H(+) = a 2-(all-trans-polyprenyl)phenol + CO2. It participates in cofactor biosynthesis; ubiquinone biosynthesis. In terms of biological role, catalyzes the decarboxylation of 3-octaprenyl-4-hydroxy benzoate to 2-octaprenylphenol, an intermediate step in ubiquinone biosynthesis. The chain is 3-octaprenyl-4-hydroxybenzoate carboxy-lyase from Neisseria meningitidis serogroup B (strain ATCC BAA-335 / MC58).